The chain runs to 495 residues: UDP-N-acetylmuramoyl-L-alanyl-D-glutamate--2,6-diaminopimelate ligase (495 aa).

UDP-N-acetyl-alpha-D-muramoyl-L-alanyl-D-glutamate contacts are provided by residues L27, S29, and 44-46 (HKA). 116–122 (GTNGKTT) contacts ATP. UDP-N-acetyl-alpha-D-muramoyl-L-alanyl-D-glutamate-binding positions include N157, 158-159 (TT), S185, Q191, and R193. K225 is modified (N6-carboxylysine). Meso-2,6-diaminopimelate-binding positions include R390, 414–417 (DNPR), G465, and E469. The Meso-diaminopimelate recognition motif motif lies at 414 to 417 (DNPR).

It belongs to the MurCDEF family. MurE subfamily. It depends on Mg(2+) as a cofactor. Carboxylation is probably crucial for Mg(2+) binding and, consequently, for the gamma-phosphate positioning of ATP.

The protein resides in the cytoplasm. The enzyme catalyses UDP-N-acetyl-alpha-D-muramoyl-L-alanyl-D-glutamate + meso-2,6-diaminopimelate + ATP = UDP-N-acetyl-alpha-D-muramoyl-L-alanyl-gamma-D-glutamyl-meso-2,6-diaminopimelate + ADP + phosphate + H(+). Its pathway is cell wall biogenesis; peptidoglycan biosynthesis. Functionally, catalyzes the addition of meso-diaminopimelic acid to the nucleotide precursor UDP-N-acetylmuramoyl-L-alanyl-D-glutamate (UMAG) in the biosynthesis of bacterial cell-wall peptidoglycan. This chain is UDP-N-acetylmuramoyl-L-alanyl-D-glutamate--2,6-diaminopimelate ligase, found in Pectobacterium atrosepticum (strain SCRI 1043 / ATCC BAA-672) (Erwinia carotovora subsp. atroseptica).